Consider the following 301-residue polypeptide: MSSVDQIVKTFANLPEGERNAAVNAILAMMPPGPGPVRQIPEPVPQAPAPKKKVNGFMGFRSYYSSLFSQFPQKARSPFMTILWQHDPFHNEWDFMCSVYSSIRNYLEQLNAQREKKITLQYWLHFAVPVMGVLGRENYLPTLGWDLVTMPNGTIDLMRIAMPLFRKNLQPMDGLCLFTKCQEGGLQVDNQHFVIAKLSDPSHDMIWFNKRPHYQQRHAAQTDSSEAGVSALFPRNHAVAAEADGVATVQLPHWMQQGDFGTESGYSPQFETLLGSILENGNATSNDSYNMALAMDVPMMG.

Residues 49-104 (APKKKVNGFMGFRSYYSSLFSQFPQKARSPFMTILWQHDPFHNEWDFMCSVYSSIR) constitute a DNA-binding region (alpha box).

It belongs to the MATALPHA1 family.

It is found in the nucleus. Its function is as follows. Mating type proteins are sequence specific DNA-binding proteins that act as master switches in fungal differentiation by controlling gene expression in a cell type-specific fashion. Transcriptional activator that induces the transcription of alpha-specific genes. This Sordaria fimicola protein is Mating type protein mtA-1 (MTA1).